A 234-amino-acid chain; its full sequence is Sugar fermentation stimulation protein homolog (234 aa).

The protein belongs to the SfsA family.

The polypeptide is Sugar fermentation stimulation protein homolog (Edwardsiella ictaluri (strain 93-146)).